Reading from the N-terminus, the 671-residue chain is Anti-sigma-I factor RsgI2 (671 aa).

The Cytoplasmic segment spans residues 1–57 (MSHYTGIILKLESDRAIVLTDGLDFMELKLKPGMQRGQHVIFDESDLYSAGLITRYK). Residues 4-51 (YTGIILKLESDRAIVLTDGLDFMELKLKPGMQRGQHVIFDESDLYSAG) form the RsgI N-terminal anti-sigma domain. A helical membrane pass occupies residues 58–78 (SIIMPFSAFAAAAAVFLVILF). Over 79–671 (SLRFVSISQE…SGTLYWGIEP (593 aa)) the chain is Extracellular. 2 disordered regions span residues 290–323 (TEAQ…IPHT) and 359–505 (PVPV…APTE). The segment covering 359-379 (PVPVSTPKPVSTPAYSSTPTP) has biased composition (low complexity). Pro residues predominate over residues 380–400 (ESTPVPVSTPKPASTPTPAST). The span at 401 to 425 (PKPVSTPTHVSTPKPISTPTSTPRP) shows a compositional bias: low complexity. A compositionally biased stretch (pro residues) spans 426–446 (ASTPKPTSTPTPESTPKPTST). The span at 447-491 (PAPVSTPTSTPIPTYTSTPASTPIPAYTSTPTSIPTLTPATSPAP) shows a compositional bias: low complexity. A compositionally biased stretch (pro residues) spans 492–502 (TSSPTPIPSPA). Residues 508–671 (LLTKIELQAY…SGTLYWGIEP (164 aa)) enclose the CBM3 domain. Thr-554, Asp-556, Asp-637, Ser-640, and Asp-641 together coordinate Ca(2+).

In terms of assembly, interacts (via RsgI N-terminal anti-sigma domain) with SigI2.

The protein localises to the cell membrane. In terms of biological role, anti-sigma factor for SigI2. Negatively regulates SigI2 activity through direct interaction. Binding of the polysaccharide substrate to the extracellular C-terminal sensing domain of RsgI2 may induce a conformational change in its N-terminal cytoplasmic region, leading to the release and activation of SigI2. The chain is Anti-sigma-I factor RsgI2 from Acetivibrio thermocellus (strain ATCC 27405 / DSM 1237 / JCM 9322 / NBRC 103400 / NCIMB 10682 / NRRL B-4536 / VPI 7372) (Clostridium thermocellum).